We begin with the raw amino-acid sequence, 190 residues long: Peptidyl-tRNA hydrolase (190 aa).

Position 14 (Tyr14) interacts with tRNA. His19 (proton acceptor) is an active-site residue. Positions 64, 66, and 113 each coordinate tRNA.

Belongs to the PTH family. In terms of assembly, monomer.

It is found in the cytoplasm. It carries out the reaction an N-acyl-L-alpha-aminoacyl-tRNA + H2O = an N-acyl-L-amino acid + a tRNA + H(+). Functionally, hydrolyzes ribosome-free peptidyl-tRNAs (with 1 or more amino acids incorporated), which drop off the ribosome during protein synthesis, or as a result of ribosome stalling. In terms of biological role, catalyzes the release of premature peptidyl moieties from peptidyl-tRNA molecules trapped in stalled 50S ribosomal subunits, and thus maintains levels of free tRNAs and 50S ribosomes. The sequence is that of Peptidyl-tRNA hydrolase from Gemmatimonas aurantiaca (strain DSM 14586 / JCM 11422 / NBRC 100505 / T-27).